Consider the following 449-residue polypeptide: Phosphoglucosamine mutase (449 aa).

Catalysis depends on Ser101, which acts as the Phosphoserine intermediate. Residues Ser101, Asp242, Asp244, and Asp246 each contribute to the Mg(2+) site. Phosphoserine is present on Ser101.

The protein belongs to the phosphohexose mutase family. It depends on Mg(2+) as a cofactor. Activated by phosphorylation.

The catalysed reaction is alpha-D-glucosamine 1-phosphate = D-glucosamine 6-phosphate. Its function is as follows. Catalyzes the conversion of glucosamine-6-phosphate to glucosamine-1-phosphate. The chain is Phosphoglucosamine mutase from Bradyrhizobium sp. (strain BTAi1 / ATCC BAA-1182).